The following is a 247-amino-acid chain: Ribosomal RNA large subunit methyltransferase E (247 aa).

S-adenosyl-L-methionine-binding residues include glycine 99, tryptophan 101, aspartate 123, aspartate 139, and aspartate 162. Lysine 202 serves as the catalytic Proton acceptor.

It belongs to the class I-like SAM-binding methyltransferase superfamily. RNA methyltransferase RlmE family.

The protein resides in the cytoplasm. It catalyses the reaction uridine(2552) in 23S rRNA + S-adenosyl-L-methionine = 2'-O-methyluridine(2552) in 23S rRNA + S-adenosyl-L-homocysteine + H(+). Specifically methylates the uridine in position 2552 of 23S rRNA at the 2'-O position of the ribose in the fully assembled 50S ribosomal subunit. This is Ribosomal RNA large subunit methyltransferase E from Anaplasma phagocytophilum (strain HZ).